We begin with the raw amino-acid sequence, 521 residues long: MSLSRSEEMHRLTENVYKTIMEQFNPSLRNFIAMGKNYEKALAGVTYAAKGYFDALVKMGELASESQGSKELGDVLFQMAEVHRQIQNQLEEMLKSFHNELLTQLEQKVELDSRYLSAALKKYQTEQRSKGDALDKCQAELKKLRKKSQGSKNPQKYSDKELQYIDAIGNKQGELESYVSDGYKTALTEERRRFCFLVEKQCAVAKNSAAYHSKGKELLAQKLPLWQQACADPNKIPDRAVQLMQQMGNSNGSILPSGLSASKSNLVISDPIPGAKPLPVPPELAPFVGRLSAQENAPVMNGVSGPDSEDYNPWADRKATQPKSTSPPQSQSKLSDSYSNTLPVRKSVAPKNSYATTENKTLPRSSSMAAGLERNGRMRVKAIFSHAAGDNSTLLSFKEGDLITLLVPEARDGWHYGESEKTKMRGWFPFSYTRVLDNDGGDRLHMSLQQGKSSSTGNLLDKEDLALPPPDYGTSSRAFPTQTAGAFKQRPYSVAVPAFSQGLDDYGARAVSSADVEVARF.

Residues 1 to 250 enclose the IMD domain; that stretch reads MSLSRSEEMH…VQLMQQMGNS (250 aa). The stretch at 132–153 forms a coiled coil; sequence DALDKCQAELKKLRKKSQGSKN. Ser-262, Ser-324, Ser-326, and Ser-337 each carry phosphoserine. Positions 297–370 are disordered; the sequence is APVMNGVSGP…TLPRSSSMAA (74 aa). Residues 321-333 show a composition bias toward low complexity; sequence QPKSTSPPQSQSK. Position 341 is a phosphothreonine (Thr-341). Ser-347 bears the Phosphoserine mark. The segment covering 353 to 368 has biased composition (polar residues); it reads SYATTENKTLPRSSSM. Residue Thr-361 is modified to Phosphothreonine. Phosphoserine occurs at positions 367, 385, 396, and 455. In terms of domain architecture, SH3 spans 375–438; the sequence is NGRMRVKAIF…PFSYTRVLDN (64 aa). Residues 450–471 form a disordered region; it reads QGKSSSTGNLLDKEDLALPPPD.

In terms of assembly, homodimer. Interacts with CDC42 and RAC1 that have been activated by GTP binding. Interacts with ATN1, ADGRB1, DIAPH1, EPS8, SHANK1, SHANK2, SHANK3, TIAM1, WASF1 and WASF2. Interacts with ENAH after recruitment of CDC42. In terms of processing, phosphorylated on tyrosine residues by INSR in response to insulin treatment.

The protein resides in the cytoplasm. The protein localises to the membrane. Its subcellular location is the cell projection. It localises to the filopodium. It is found in the ruffle. The protein resides in the cytoskeleton. Adapter protein that links membrane-bound small G-proteins to cytoplasmic effector proteins. Necessary for CDC42-mediated reorganization of the actin cytoskeleton and for RAC1-mediated membrane ruffling. Involved in the regulation of the actin cytoskeleton by WASF family members and the Arp2/3 complex. Plays a role in neurite growth. Acts syngeristically with ENAH to promote filipodia formation. Plays a role in the reorganization of the actin cytoskeleton in response to bacterial infection. Participates in actin bundling when associated with EPS8, promoting filopodial protrusions. This chain is BAR/IMD domain-containing adapter protein 2 (BAIAP2), found in Bos taurus (Bovine).